Here is a 610-residue protein sequence, read N- to C-terminus: METAPKPGKDVPPKKDKLQTKRKKPRRYWEEETVPTTAGASPGPPRNKKNRELRPQRPKNAYILKKSRISKKPQVPKKPREWKNPESQRGLSGTQDPFPGPAPVPVEVVQKFCRIDKSRKLPHSKAKTRSRLEVAEAEEEETSIKAARSELLLAEEPGFLEGEDGEDTAKICQADIVEAVDIASAAKHFDLNLRQFGPYRLNYSRTGRHLAFGGRRGHVAALDWVTKKLMCEINVMEAVRDIRFLHSEALLAVAQNRWLHIYDNQGIELHCIRRCDRVTRLEFLPFHFLLATASETGFLTYLDVSVGKIVAALNARAGRLDVMSQNPYNAVIHLGHSNGTVSLWSPAMKEPLAKILCHRGGVRAVAVDSTGTYMATSGLDHQLKIFDLRGTYQPLSTRTLPHGAGHLAFSQRGLLVAGMGDVVNIWAGQGKASPPSLEQPYLTHRLSGPVHGLQFCPFEDVLGVGHTGGITSMLVPGAGEPNFDGLESNPYRSRKQRQEWEVKALLEKVPAELICLDPRALAEVDVISLEQGKKEQIERLGYDPQAKAPFQPKPKQKGRSSTASLVKRKRKVMDEEHRDKVRQSLQQQHHKEAKAKPTGARPSALDRFVR.

Residues M1–P103 form a disordered region. A compositionally biased stretch (basic and acidic residues) spans P7–Q19. S41 bears the Phosphoserine mark. Over residues K65–K77 the composition is skewed to basic residues. WD repeat units lie at residues L193–N234, V235–I272, R274–A312, A315–K354, C357–S396, and T399–S436. A disordered region spans residues E538–R610. Residues V572–R582 show a composition bias toward basic and acidic residues.

In terms of assembly, part of the small subunit (SSU) processome, composed of more than 70 proteins and the RNA chaperone small nucleolar RNA (snoRNA) U3. Interacts with DDX21, NCL, NOP2 and EBNA1BP2.

The protein localises to the nucleus. The protein resides in the nucleolus. In terms of biological role, scaffold component of the nucleolar structure. Required for localization of DDX21 and NCL to the granular compartment of the nucleolus. Part of the small subunit (SSU) processome, first precursor of the small eukaryotic ribosomal subunit. During the assembly of the SSU processome in the nucleolus, many ribosome biogenesis factors, an RNA chaperone and ribosomal proteins associate with the nascent pre-rRNA and work in concert to generate RNA folding, modifications, rearrangements and cleavage as well as targeted degradation of pre-ribosomal RNA by the RNA exosome. The protein is WD repeat-containing protein 46 (WDR46) of Homo sapiens (Human).